Here is a 196-residue protein sequence, read N- to C-terminus: Kunitz trypsin inhibitor 5 (196 aa).

An N-terminal signal peptide occupies residues 1 to 19; sequence MSSLLYIFLLLAVFISHRG. A disulfide bridge links cysteine 156 with cysteine 167.

Belongs to the protease inhibitor I3 (leguminous Kunitz-type inhibitor) family.

It is found in the endoplasmic reticulum. Can inhibit both serine proteases and cysteine proteases. May be involved in the modulation of the proteases that participate in the hydrolysis of dietary proteins in the gut of spider mites. This is Kunitz trypsin inhibitor 5 from Arabidopsis thaliana (Mouse-ear cress).